Reading from the N-terminus, the 601-residue chain is Elongation factor 4 (601 aa).

Positions 8 to 189 constitute a tr-type G domain; sequence EQIRNFGIIA…LIVRKAPPPK (182 aa). Residue 20-25 participates in GTP binding; sequence DHGKST.

The protein belongs to the TRAFAC class translation factor GTPase superfamily. Classic translation factor GTPase family. LepA subfamily.

The protein resides in the cell membrane. The enzyme catalyses GTP + H2O = GDP + phosphate + H(+). In terms of biological role, required for accurate and efficient protein synthesis under certain stress conditions. May act as a fidelity factor of the translation reaction, by catalyzing a one-codon backward translocation of tRNAs on improperly translocated ribosomes. Back-translocation proceeds from a post-translocation (POST) complex to a pre-translocation (PRE) complex, thus giving elongation factor G a second chance to translocate the tRNAs correctly. Binds to ribosomes in a GTP-dependent manner. The chain is Elongation factor 4 from Tropheryma whipplei (strain Twist) (Whipple's bacillus).